We begin with the raw amino-acid sequence, 192 residues long: ATP-dependent Clp protease proteolytic subunit 1 (192 aa).

Serine 92 serves as the catalytic Nucleophile. The active site involves histidine 117.

The protein belongs to the peptidase S14 family. As to quaternary structure, fourteen ClpP subunits assemble into 2 heptameric rings which stack back to back to give a disk-like structure with a central cavity, resembling the structure of eukaryotic proteasomes.

Its subcellular location is the cytoplasm. The enzyme catalyses Hydrolysis of proteins to small peptides in the presence of ATP and magnesium. alpha-casein is the usual test substrate. In the absence of ATP, only oligopeptides shorter than five residues are hydrolyzed (such as succinyl-Leu-Tyr-|-NHMec, and Leu-Tyr-Leu-|-Tyr-Trp, in which cleavage of the -Tyr-|-Leu- and -Tyr-|-Trp bonds also occurs).. Functionally, cleaves peptides in various proteins in a process that requires ATP hydrolysis. Has a chymotrypsin-like activity. Plays a major role in the degradation of misfolded proteins. The sequence is that of ATP-dependent Clp protease proteolytic subunit 1 from Chlamydia muridarum (strain MoPn / Nigg).